A 125-amino-acid polypeptide reads, in one-letter code: Small ribosomal subunit protein uS13 (125 aa).

The tract at residues 90-125 is disordered; that stretch reads TRHRRGLPVRGQRTHTNARTKKGPRRAIAGKKKVTK.

The protein belongs to the universal ribosomal protein uS13 family. In terms of assembly, part of the 30S ribosomal subunit. Forms a loose heterodimer with protein S19. Forms two bridges to the 50S subunit in the 70S ribosome.

In terms of biological role, located at the top of the head of the 30S subunit, it contacts several helices of the 16S rRNA. In the 70S ribosome it contacts the 23S rRNA (bridge B1a) and protein L5 of the 50S subunit (bridge B1b), connecting the 2 subunits; these bridges are implicated in subunit movement. Contacts the tRNAs in the A and P-sites. The polypeptide is Small ribosomal subunit protein uS13 (Gemmatimonas aurantiaca (strain DSM 14586 / JCM 11422 / NBRC 100505 / T-27)).